A 729-amino-acid polypeptide reads, in one-letter code: Beta-galactosidase 4 (729 aa).

Positions 1 to 35 (MAPAPTPAAAAGRRVAVLAAALVAASLAASVGVAN) are cleaved as a signal peptide. Glutamate 194 serves as the catalytic Proton donor. The Nucleophile role is filled by glutamate 263.

Belongs to the glycosyl hydrolase 35 family.

Its subcellular location is the secreted. It localises to the extracellular space. The protein resides in the apoplast. The catalysed reaction is Hydrolysis of terminal non-reducing beta-D-galactose residues in beta-D-galactosides.. This chain is Beta-galactosidase 4, found in Oryza sativa subsp. japonica (Rice).